The primary structure comprises 115 residues: U3-lycotoxin-Ls1s (115 aa).

An N-terminal signal peptide occupies residues 1-20; the sequence is MKFVLLFGVFLLTLFSYSSS. The propeptide occupies 21-44; sequence EMLDDFDQADEDELLSLIEKEEAR. Disulfide bonds link Cys-48–Cys-63, Cys-55–Cys-72, Cys-62–Cys-87, and Cys-74–Cys-85.

It belongs to the neurotoxin 19 (CSTX) family. 01 subfamily. In terms of tissue distribution, expressed by the venom gland.

The protein resides in the secreted. This chain is U3-lycotoxin-Ls1s, found in Lycosa singoriensis (Wolf spider).